The sequence spans 754 residues: Protein tyrosine phosphatase domain-containing protein 1 (754 aa).

Residues 82 to 253 form the Tyrosine-protein phosphatase domain; that stretch reads YSSWVTDNIL…LTPLRNIFSC (172 aa). C190 functions as the Phosphocysteine intermediate in the catalytic mechanism. S392 and S394 each carry phosphoserine. Polar residues predominate over residues 487 to 498; the sequence is SGAFSADVSGSH. The disordered stretch occupies residues 487-554; that stretch reads SGAFSADVSG…PRSPLDCGSS (68 aa). A Phosphoserine modification is found at S547.

The protein belongs to the protein-tyrosine phosphatase family. Non-receptor class PTPDC1 subfamily.

Its function is as follows. May play roles in cilia formation and/or maintenance. This Homo sapiens (Human) protein is Protein tyrosine phosphatase domain-containing protein 1 (PTPDC1).